A 1264-amino-acid chain; its full sequence is P-type sodium-transporting ATPase4 (1264 aa).

Residues 1-12 (MSSQNNNKQGGQ) show a composition bias toward polar residues. The interval 1 to 102 (MSSQNNNKQG…INGEKNDDNN (102 aa)) is disordered. Basic and acidic residues-rich tracts occupy residues 15–42 (NNKK…DELN) and 50–64 (NDMK…KKNE). Transmembrane regions (helical) follow at residues 165 to 185 (VWLI…LVAA), 186 to 206 (VASL…IVTL), 359 to 379 (GLIG…AVII), 393 to 413 (FVII…GLPM), 923 to 943 (FVCF…VAIV), 1006 to 1026 (IFEA…CTGF), 1203 to 1223 (CSIS…TSIL), and 1226 to 1246 (TCLL…NLFL).

It belongs to the cation transport ATPase (P-type) (TC 3.A.3) family.

It is found in the cell membrane. The catalysed reaction is Na(+)(in) + ATP + H2O = Na(+)(out) + ADP + phosphate + H(+). Inhibited by cipargamin and other spiroindolone compounds. Inhibited by 4-cyano-3-methylisoquinoline derivatives MB14 and MB10 but not RK18. Inhibited by (+)-SJ733, a dihydroisoquinolone compound. In terms of biological role, sodium-exporting ATPase. Required for the extrusion of Na(+) from the intraerythrocytic parasites to maintain a low cytosolic concentration of Na(+). In Plasmodium falciparum (isolate 3D7), this protein is P-type sodium-transporting ATPase4.